A 246-amino-acid chain; its full sequence is uncharacterized protein (246 aa).

This is an uncharacterized protein from Methanocaldococcus jannaschii (strain ATCC 43067 / DSM 2661 / JAL-1 / JCM 10045 / NBRC 100440) (Methanococcus jannaschii).